Consider the following 440-residue polypeptide: MSVFKASFLFLLSSSLVHGVPHSSRASRSQQCVVPSKYQASNGMADDSVAVSQAFAQCATDSVIIFEEGVNYNIFQPITATNLSNVEIRMHGNLHLPQNITAVQNIVSDGTSTWFTLEGPKVDWIGPEDVNNGWIDSYGQPWWDANPAGSSGIDNRPHLMSFKSSQATMKYFRSRKPIAWNVKLHGQDITVSHAIIDATSTGSFPFNTDGFDVEGTNIQITDSIMYNGDDAIAVGADSHDTLFTRNTIGYQTHGMSIGSLGKDPTDFANISNIRFDDVTVVDGLYAARFKSWSGGTGLVKNVTWNNIRVFNVTFPIFVTQSYSDQGASRSGTVNASSAVMMEDFTWSDFAGSINTYQPGDGSCVSDPCWYNVGLPNLKHTEALIIECHTAQSCKNFVTDNIQLYPQVLEPASVICMNATAALNPDLGFTCKNGTYSPLSN.

The N-terminal stretch at 1 to 19 (MSVFKASFLFLLSSSLVHG) is a signal peptide. 2 N-linked (GlcNAc...) asparagine glycosylation sites follow: N82 and N99. PbH1 repeat units follow at residues 215 to 236 (GTNIQITDSIMYNGDDAIAVGA), 238 to 259 (SHDTLFTRNTIGYQTHGMSIGS), and 265 to 288 (TDFANISNIRFDDVTVVDGLYAAR). Catalysis depends on D229, which acts as the Proton donor. H253 is an active-site residue. N-linked (GlcNAc...) asparagine glycans are attached at residues N269, N301, N311, and N334. A disulfide bridge connects residues C387 and C393. N-linked (GlcNAc...) asparagine glycans are attached at residues N417 and N432.

The protein belongs to the glycosyl hydrolase 28 family.

Its subcellular location is the secreted. The enzyme catalyses [(1-&gt;4)-alpha-D-galacturonosyl](n) + H2O = alpha-D-galacturonate + [(1-&gt;4)-alpha-D-galacturonosyl](n-1). In terms of biological role, specific in hydrolyzing the terminal glycosidic bond of polygalacturonic acid and oligogalacturonates. The polypeptide is Probable exopolygalacturonase C (pgxC) (Aspergillus niger (strain ATCC MYA-4892 / CBS 513.88 / FGSC A1513)).